The chain runs to 114 residues: N(4)-acetylcytidine amidohydrolase (114 aa).

The region spanning 8–93 is the ASCH domain; the sequence is TFFEFLTPLV…ALIQEIYPNI (86 aa). Catalysis depends on Lys-22, which acts as the Proton acceptor. The Nucleophile role is filled by Thr-25. The Proton donor role is filled by Glu-75.

The protein belongs to the N(4)-acetylcytidine amidohydrolase family.

The enzyme catalyses N(4)-acetylcytidine + H2O = cytidine + acetate + H(+). It catalyses the reaction N(4)-acetyl-2'-deoxycytidine + H2O = 2'-deoxycytidine + acetate + H(+). The catalysed reaction is N(4)-acetylcytosine + H2O = cytosine + acetate + H(+). Its function is as follows. Catalyzes the hydrolysis of N(4)-acetylcytidine (ac4C). This is N(4)-acetylcytidine amidohydrolase from Vibrio cholerae serotype O1 (strain ATCC 39541 / Classical Ogawa 395 / O395).